A 314-amino-acid chain; its full sequence is Ribosomal RNA small subunit methyltransferase H (314 aa).

S-adenosyl-L-methionine-binding positions include 31–33 (GGY), D49, F76, D118, and Q125.

It belongs to the methyltransferase superfamily. RsmH family.

It is found in the cytoplasm. The enzyme catalyses cytidine(1402) in 16S rRNA + S-adenosyl-L-methionine = N(4)-methylcytidine(1402) in 16S rRNA + S-adenosyl-L-homocysteine + H(+). Specifically methylates the N4 position of cytidine in position 1402 (C1402) of 16S rRNA. The sequence is that of Ribosomal RNA small subunit methyltransferase H from Wolbachia pipientis wMel.